The sequence spans 251 residues: Imidazole glycerol phosphate synthase subunit HisF (251 aa).

Residues aspartate 11 and aspartate 130 contribute to the active site.

It belongs to the HisA/HisF family. In terms of assembly, heterodimer of HisH and HisF.

It localises to the cytoplasm. The enzyme catalyses 5-[(5-phospho-1-deoxy-D-ribulos-1-ylimino)methylamino]-1-(5-phospho-beta-D-ribosyl)imidazole-4-carboxamide + L-glutamine = D-erythro-1-(imidazol-4-yl)glycerol 3-phosphate + 5-amino-1-(5-phospho-beta-D-ribosyl)imidazole-4-carboxamide + L-glutamate + H(+). The protein operates within amino-acid biosynthesis; L-histidine biosynthesis; L-histidine from 5-phospho-alpha-D-ribose 1-diphosphate: step 5/9. Functionally, IGPS catalyzes the conversion of PRFAR and glutamine to IGP, AICAR and glutamate. The HisF subunit catalyzes the cyclization activity that produces IGP and AICAR from PRFAR using the ammonia provided by the HisH subunit. The polypeptide is Imidazole glycerol phosphate synthase subunit HisF (Pelagibacter ubique (strain HTCC1062)).